A 189-amino-acid chain; its full sequence is Interferon alpha-10 (189 aa).

The first 23 residues, 1-23 (MALSFSLLMAVLVLSYKSICSLG), serve as a signal peptide directing secretion. Intrachain disulfides connect Cys24–Cys122 and Cys52–Cys162.

It belongs to the alpha/beta interferon family.

It is found in the secreted. Functionally, produced by macrophages, IFN-alpha have antiviral activities. Interferon stimulates the production of two enzymes: a protein kinase and an oligoadenylate synthetase. In Homo sapiens (Human), this protein is Interferon alpha-10 (IFNA10).